A 335-amino-acid polypeptide reads, in one-letter code: DNA-directed RNA polymerase subunit alpha (335 aa).

Residues 1–233 (MMLNATEFLT…QQISIFVDLE (233 aa)) form an alpha N-terminal domain (alpha-NTD) region. An alpha C-terminal domain (alpha-CTD) region spans residues 247-335 (VDPVLLRPVD…VDDRFSYRSR (89 aa)).

The protein belongs to the RNA polymerase alpha chain family. In terms of assembly, homodimer. The RNAP catalytic core consists of 2 alpha, 1 beta, 1 beta' and 1 omega subunit. When a sigma factor is associated with the core the holoenzyme is formed, which can initiate transcription.

It carries out the reaction RNA(n) + a ribonucleoside 5'-triphosphate = RNA(n+1) + diphosphate. Its function is as follows. DNA-dependent RNA polymerase catalyzes the transcription of DNA into RNA using the four ribonucleoside triphosphates as substrates. This chain is DNA-directed RNA polymerase subunit alpha, found in Psychrobacter arcticus (strain DSM 17307 / VKM B-2377 / 273-4).